The sequence spans 121 residues: Basic phospholipase A2 homolog AppP2 (121 aa).

7 disulfide bridges follow: Cys-26–Cys-115, Cys-28–Cys-44, Cys-43–Cys-95, Cys-49–Cys-121, Cys-50–Cys-88, Cys-57–Cys-81, and Cys-75–Cys-86. The tract at residues 105 to 117 is important for membrane-damaging activities in eukaryotes and bacteria; heparin-binding; the sequence is KKYKAYFKLKCKK.

The protein belongs to the phospholipase A2 family. Group II subfamily. K49 sub-subfamily. In terms of assembly, monomer. Expressed by the venom gland.

The protein localises to the secreted. Functionally, snake venom phospholipase A2 (PLA2) that lacks enzymatic activity. Displays edema-inducing activities. Is myotoxic. A model of myotoxic mechanism has been proposed: an apo Lys49-PLA2 is activated by the entrance of a hydrophobic molecule (e.g. fatty acid) at the hydrophobic channel of the protein leading to a reorientation of a monomer. This reorientation causes a transition between 'inactive' to 'active' states, causing alignment of C-terminal and membrane-docking sites (MDoS) side-by-side and putting the membrane-disruption sites (MDiS) in the same plane, exposed to solvent and in a symmetric position for both monomers. The MDoS region stabilizes the toxin on membrane by the interaction of charged residues with phospholipid head groups. Subsequently, the MDiS region destabilizes the membrane with penetration of hydrophobic residues. This insertion causes a disorganization of the membrane, allowing an uncontrolled influx of ions (i.e. calcium and sodium), and eventually triggering irreversible intracellular alterations and cell death. This Agkistrodon piscivorus piscivorus (Eastern cottonmouth) protein is Basic phospholipase A2 homolog AppP2.